The sequence spans 469 residues: MEGSSSGRLRDLPSVDAVLKAPAALAMLERFGRAASTDAVRAALADARAAIAGGASHAPDAAVLARAAEASLEADELSNMRPLFNLTGTVLHTNLGRAVLAEAAIEAAVAAMRDPVALEFDLETGKRGERDDHVRALLCELTGAEDATLVNNNAAAVLLCLNTLAAGREAIVSRGELIEIGGAFRMPDIMARAGAKLVEVGTTNRTHLKDYRVALSAQTGVILKVHTSNYRIEGFTAEVGAAELAALAGQANVPLMNDLGSGTLIDLSRYGLQREPTVREAVREGSGLVTFSGDKLLGGPQAGFIVGARALIEAVNRNPMKRALRVDKIRLAAIEATLKLYRDPDRLAERLPTLRLLARPLAEIEAQARRLLPAAAVAVEPAYQVALRLCRSQVGSGALPLDTIESAGLIIRPTNGSRSLERLAGALRALARPIIGRIEDGGLLLDLRCLTDEAGFLSSLSALDADALA.

An N6-(pyridoxal phosphate)lysine modification is found at Lys295.

Belongs to the SelA family. Requires pyridoxal 5'-phosphate as cofactor.

The protein localises to the cytoplasm. The enzyme catalyses L-seryl-tRNA(Sec) + selenophosphate + H(+) = L-selenocysteinyl-tRNA(Sec) + phosphate. It participates in aminoacyl-tRNA biosynthesis; selenocysteinyl-tRNA(Sec) biosynthesis; selenocysteinyl-tRNA(Sec) from L-seryl-tRNA(Sec) (bacterial route): step 1/1. Functionally, converts seryl-tRNA(Sec) to selenocysteinyl-tRNA(Sec) required for selenoprotein biosynthesis. The polypeptide is L-seryl-tRNA(Sec) selenium transferase (Methylocella silvestris (strain DSM 15510 / CIP 108128 / LMG 27833 / NCIMB 13906 / BL2)).